We begin with the raw amino-acid sequence, 101 residues long: Interleukin-8 (101 aa).

Residues 1-22 (MTSKLVVALLAAFMLSAALCEA) form the signal peptide. Arginine 27 is modified (citrulline). 2 cysteine pairs are disulfide-bonded: cysteine 34-cysteine 61 and cysteine 36-cysteine 77.

Belongs to the intercrine alpha (chemokine CxC) family. As to quaternary structure, homodimer. Interacts with TNFAIP6 (via Link domain); this interaction interferes with chemokine binding to glycosaminoglycans. Post-translationally, citrullination at Arg-27 prevents proteolysis, and dampens tissue inflammation, it also enhances leukocytosis, possibly through impaired chemokine clearance from the blood circulation.

The protein localises to the secreted. Chemotactic factor that mediates inflammatory response by attracting neutrophils, basophils, and T-cells to clear pathogens and protect the host from infection. Also plays an important role in neutrophil activation. Released in response to an inflammatory stimulus, exerts its effect by binding to the G-protein-coupled receptors CXCR1 and CXCR2, primarily found in neutrophils, monocytes and endothelial cells. G-protein heterotrimer (alpha, beta, gamma subunits) constitutively binds to CXCR1/CXCR2 receptor and activation by IL8 leads to beta and gamma subunits release from Galpha (GNAI2 in neutrophils) and activation of several downstream signaling pathways including PI3K and MAPK pathways. The sequence is that of Interleukin-8 (CXCL8) from Felis catus (Cat).